Here is an 81-residue protein sequence, read N- to C-terminus: ATP synthase subunit c (81 aa).

The next 2 membrane-spanning stretches (helical) occupy residues 5 to 25 (IAAGALIGGGLIMAGGAIGAG) and 57 to 77 (VGLVEAAYFINLAFMALFVFA).

The protein belongs to the ATPase C chain family. F-type ATPases have 2 components, F(1) - the catalytic core - and F(0) - the membrane proton channel. F(1) has five subunits: alpha(3), beta(3), gamma(1), delta(1), epsilon(1). F(0) has three main subunits: a(1), b(2) and c(10-14). The alpha and beta chains form an alternating ring which encloses part of the gamma chain. F(1) is attached to F(0) by a central stalk formed by the gamma and epsilon chains, while a peripheral stalk is formed by the delta and b chains.

It is found in the cell membrane. F(1)F(0) ATP synthase produces ATP from ADP in the presence of a proton or sodium gradient. F-type ATPases consist of two structural domains, F(1) containing the extramembraneous catalytic core and F(0) containing the membrane proton channel, linked together by a central stalk and a peripheral stalk. During catalysis, ATP synthesis in the catalytic domain of F(1) is coupled via a rotary mechanism of the central stalk subunits to proton translocation. In terms of biological role, key component of the F(0) channel; it plays a direct role in translocation across the membrane. A homomeric c-ring of between 10-14 subunits forms the central stalk rotor element with the F(1) delta and epsilon subunits. The polypeptide is ATP synthase subunit c (Mycobacterium bovis (strain ATCC BAA-935 / AF2122/97)).